Consider the following 145-residue polypeptide: Transcription antitermination protein NusB (145 aa).

Belongs to the NusB family.

In terms of biological role, involved in transcription antitermination. Required for transcription of ribosomal RNA (rRNA) genes. Binds specifically to the boxA antiterminator sequence of the ribosomal RNA (rrn) operons. This Acidothermus cellulolyticus (strain ATCC 43068 / DSM 8971 / 11B) protein is Transcription antitermination protein NusB.